Reading from the N-terminus, the 834-residue chain is Prominin-2 (834 aa).

Residues 1–26 form the signal peptide; sequence MKHTLALLAPLLGLGLGLALSQLAAG. Residues 27-106 lie on the Extracellular side of the membrane; the sequence is ATDCKFLGPA…NEVVRYEAGY (80 aa). The helical transmembrane segment at 107 to 127 threads the bilayer; that stretch reads VVCAVIAGLYLLLVPTAGLCF. At 128–153 the chain is on the cytoplasmic side; it reads CCCRCHRRCGGRVKTEHKALACERAA. Residues 154-174 traverse the membrane as a helical segment; the sequence is LMVFLLLTTLLLLIGVVCAFV. The Extracellular segment spans residues 175–426; it reads TNQRTHEQMG…EVQRYETYRW (252 aa). An N-linked (GlcNAc...) asparagine glycan is attached at asparagine 270. A helical membrane pass occupies residues 427–447; the sequence is IVGCVLCSVVLFVVLCNLLGL. The Cytoplasmic portion of the chain corresponds to 448–472; the sequence is NLGIWGLSARDDPSHPEAKGEAGAR. The chain crosses the membrane as a helical span at residues 473-493; the sequence is FLMAGVGLSFLFAAPLILLVF. Residues 494–779 lie on the Extracellular side of the membrane; sequence ATFLVGGNVQ…LCDMMADPWN (286 aa). Position 727 is a phosphoserine (serine 727). A helical membrane pass occupies residues 780–800; sequence AFWFCLAWCTFFLIPSIIFAV. Topologically, residues 801-834 are cytoplasmic; the sequence is KTSKYFRPIRKRLSSTSSEETQLFHIPRVTSLKL. A Phosphoserine modification is found at serine 818.

This sequence belongs to the prominin family. Binds cholesterol. In terms of processing, glycosylated. Present in saliva within small membrane particles (at protein level). Expressed in kidney, prostate, trachea, esophagus, salivary gland, thyroid gland, mammary gland adrenal gland, placenta, stomach, spinal cord and liver. In submucosal tumor, expressed in spindle-shaped or stellate stromal cells. Expressed in prostate cancer cell lines.

Its subcellular location is the apical cell membrane. The protein localises to the basolateral cell membrane. The protein resides in the cell projection. It is found in the microvillus membrane. It localises to the cilium membrane. This chain is Prominin-2 (PROM2), found in Homo sapiens (Human).